The primary structure comprises 394 residues: MSKETFQRNKPHINIGTIGHVDHGKTTLTAAITRALSAEGLANFCDYSSIDNTPEEKARGITINASHVEYETPNRHYAHVDCPGHADYVKNMITGAAQMDGAILVVSATDGAMPQTKEHILLARQVGVPYIVVFLNKIDMISQEDAELVDLVEMELSELLEEKGYKGCPIIRGSALKALEGDASYVEKIRELMQAVDDNIPTPEREIDKPFLMPIEDVFSISGRGTVVTGRIERGVVKVGDKVQIVGLRDTRESIVTGVEMFRKELPEGQAGENVGLLLRGIGKNDVERGMVICQPNSVKSHTQFKGAVYILQKEEGGRHKPFFTGYRPQFFFRTTDVTGIVNLPEGTEMVMPGDNVEIDVQLISPVALEEGMRFAIREGGRTIGAGTISKIIA.

The 195-residue stretch at 10-204 folds into the tr-type G domain; it reads KPHINIGTIG…AVDDNIPTPE (195 aa). Positions 19–26 are G1; the sequence is GHVDHGKT. 19-26 contributes to the GTP binding site; sequence GHVDHGKT. Thr-26 is a Mg(2+) binding site. The tract at residues 60-64 is G2; sequence GITIN. The interval 81 to 84 is G3; sequence DCPG. Residues 81 to 85 and 136 to 139 contribute to the GTP site; these read DCPGH and NKID. The G4 stretch occupies residues 136 to 139; sequence NKID. The interval 174–176 is G5; sequence SAL.

It belongs to the TRAFAC class translation factor GTPase superfamily. Classic translation factor GTPase family. EF-Tu/EF-1A subfamily. In terms of assembly, monomer.

Its subcellular location is the cytoplasm. The catalysed reaction is GTP + H2O = GDP + phosphate + H(+). GTP hydrolase that promotes the GTP-dependent binding of aminoacyl-tRNA to the A-site of ribosomes during protein biosynthesis. The protein is Elongation factor Tu of Chlamydia felis (strain Fe/C-56) (Chlamydophila felis).